Here is an 804-residue protein sequence, read N- to C-terminus: Ribonucleoside-diphosphate reductase large subunit-like protein (804 aa).

It belongs to the ribonucleoside diphosphate reductase large chain family.

It is found in the virion. Its subcellular location is the host cytoplasm. In terms of biological role, does not possess a ribonucleotide reductase activity. Betaherpesviruses probably use another strategy to expand the dNTP pool in a quiescent host cell. In Homo sapiens (Human), this protein is Ribonucleoside-diphosphate reductase large subunit-like protein.